The chain runs to 69 residues: Snake venom metalloproteinase BnP2 (69 aa).

The 69-residue stretch at 1–69 (YIELAVVADH…EWRERDIIPR (69 aa)) folds into the Peptidase M12B domain. Glu-3 serves as a coordination point for Ca(2+).

This sequence belongs to the venom metalloproteinase (M12B) family. P-I subfamily. In terms of assembly, monomer. Zn(2+) is required as a cofactor. Expressed by the venom gland.

The protein resides in the secreted. With respect to regulation, inhibited by EDTA. Its function is as follows. This protein is a zinc protease from snake venom that is devoid of significant myotoxic and hemorrhagic activities. It hydrolyzes the Aalpha-chain and more slowly the Bbeta-chain of fibrin and fibrinogen, without affecting the gamma-chains. It induces cell detachment and a apoptosis (anoikis) in endothelial cells. This Bothrops pauloensis (Neuwied's lancehead) protein is Snake venom metalloproteinase BnP2.